A 555-amino-acid chain; its full sequence is MTHLSDLDIANQSTLQPIKDIAASVGISEDALEPYGHYKAKIDINKITPRENKGKVVLVTAMSPTPAGEGKSTVTVGLADAFHELNKNVMVALREPALGPTFGIKGGATGGGYAQVLPMEDINLHFNGDFHAITTANNALSAFIDNHIHQGNELGIDQRRIEWKRVLDMNDRALRHVNVGLGGPTNGVPREDGFNITVASEIMAILCLSRSIKDLKDKISRITIGYTRDRKPVTVADLKVEGALAMILKDAIKPNLVQSIEGTPALVHGGPFANIAHGCNSILATETARDLADIVVTEAGFGSDLGAEKFMDIKVREAGFDPAAVVVVATIRALKMHGGVAKDNLKEENVEAVKAGIVNLERHVNNIKKFGVEPVVAINAFIHDTDAEVEYVKSWAKENNVRIALTEVWKKGGKGGVDLANEVLEVIDQPNSFKPLYELELPLEQKIEKIVTEIYGGSKVTFSSKAQKQLKQFKENGWDNYPVCMAKTQYSFSDDQTLLGAPSGFEITIRELEAKTGAGFIVALTGAIMTMPGLPKKPAALNMDVTDDGHAIGLF.

65 to 72 lines the ATP pocket; it reads TPAGEGKS.

Belongs to the formate--tetrahydrofolate ligase family.

The enzyme catalyses (6S)-5,6,7,8-tetrahydrofolate + formate + ATP = (6R)-10-formyltetrahydrofolate + ADP + phosphate. The protein operates within one-carbon metabolism; tetrahydrofolate interconversion. The protein is Formate--tetrahydrofolate ligase of Staphylococcus aureus (strain USA300).